We begin with the raw amino-acid sequence, 362 residues long: Probable endopolygalacturonase B (362 aa).

The N-terminal stretch at 1-20 is a signal peptide; sequence MHFLQNAVVAATMGAALAAA. Positions 21-25 are excised as a propeptide; sequence APLEK. An intrachain disulfide couples Cys28 to Cys43. PbH1 repeat units follow at residues 155 to 184, 185 to 206, 207 to 227, 236 to 257, 265 to 287, and 299 to 344; these read ADHLTITDVTIDNSAGTSKGHNTDAFDIGQ, STYITIDGATVYNQDDCLAINS, GEHITFTNGYCDGGHGLSIGS, VNDVTISNSKVLNSQNGVRIKT, VENVKFEDITLSDISKYGIVVEQ, and TNGV…DVTG. The Proton donor role is filled by Asp199. Cys201 and Cys217 are joined by a disulfide. His221 is a catalytic residue. Cysteines 327 and 332 form a disulfide. The N-linked (GlcNAc...) asparagine glycan is linked to Asn334. The cysteines at positions 351 and 360 are disulfide-linked.

The protein belongs to the glycosyl hydrolase 28 family.

The protein resides in the secreted. The catalysed reaction is (1,4-alpha-D-galacturonosyl)n+m + H2O = (1,4-alpha-D-galacturonosyl)n + (1,4-alpha-D-galacturonosyl)m.. Involved in maceration and soft-rotting of plant tissue. Hydrolyzes the 1,4-alpha glycosidic bonds of de-esterified pectate in the smooth region of the plant cell wall. This Aspergillus niger (strain ATCC MYA-4892 / CBS 513.88 / FGSC A1513) protein is Probable endopolygalacturonase B (pgaB).